Consider the following 217-residue polypeptide: uncharacterized protein (217 aa).

This is an uncharacterized protein from Escherichia coli.